Here is a 427-residue protein sequence, read N- to C-terminus: UPF0229 protein YeaH (427 aa).

The interval 87–110 (RIERSQGGGGGSGSGQGQASQDGE) is disordered. Residues 92 to 102 (QGGGGGSGSGQ) are compositionally biased toward gly residues.

Belongs to the UPF0229 family.

The sequence is that of UPF0229 protein YeaH from Escherichia coli O6:K15:H31 (strain 536 / UPEC).